A 324-amino-acid chain; its full sequence is MELLPHEKQVVEYEKTIAEFKEKNKENSLLSSSEIQKLDKRLDRLKEKIYSDLTPWERVQICRHPSRPRTVNYIEGMCEEFVELCGDRTFRDDPAVVGGFAKIQGQRFMLIGQEKGCDTKSRMHRNFGMLCPEGFRKALRLAKMAEKFGLPIIFLVDTPGAFPGLTAEERGQGWAIATNLFELARLATPIIVIVIGEGCSGGALGMAIGDVVAMLEHSYYSVISPEGCASILWKDPKKNSDAAAMLKMHGEDLKGFAIVDAVIKEPIGGAHHNPAATYRSVQEYVLQEWLKLKDLPVEELLEKRYQKFRTIGLYETSSESDSEA.

A CoA carboxyltransferase C-terminal domain is found at 37 to 291 (KLDKRLDRLK…QEYVLQEWLK (255 aa)).

It belongs to the AccA family. As to quaternary structure, acetyl-CoA carboxylase is a heterohexamer composed of biotin carboxyl carrier protein (AccB), biotin carboxylase (AccC) and two subunits each of ACCase subunit alpha (AccA) and ACCase subunit beta (AccD).

It localises to the cytoplasm. It catalyses the reaction N(6)-carboxybiotinyl-L-lysyl-[protein] + acetyl-CoA = N(6)-biotinyl-L-lysyl-[protein] + malonyl-CoA. Its pathway is lipid metabolism; malonyl-CoA biosynthesis; malonyl-CoA from acetyl-CoA: step 1/1. Component of the acetyl coenzyme A carboxylase (ACC) complex. First, biotin carboxylase catalyzes the carboxylation of biotin on its carrier protein (BCCP) and then the CO(2) group is transferred by the carboxyltransferase to acetyl-CoA to form malonyl-CoA. The sequence is that of Acetyl-coenzyme A carboxylase carboxyl transferase subunit alpha from Chlamydia trachomatis serovar D (strain ATCC VR-885 / DSM 19411 / UW-3/Cx).